Here is an 89-residue protein sequence, read N- to C-terminus: Cytochrome b (89 aa).

The next 2 membrane-spanning stretches (helical) occupy residues 38–58 (FGPL…FLAM) and 82–89 (WLLRYMHA). His-88 contributes to the heme b binding site.

Belongs to the cytochrome b family. As to quaternary structure, the main subunits of complex b-c1 are: cytochrome b, cytochrome c1 and the Rieske protein. Requires heme b as cofactor.

Its subcellular location is the mitochondrion inner membrane. Component of the ubiquinol-cytochrome c reductase complex (complex III or cytochrome b-c1 complex) that is part of the mitochondrial respiratory chain. The b-c1 complex mediates electron transfer from ubiquinol to cytochrome c. Contributes to the generation of a proton gradient across the mitochondrial membrane that is then used for ATP synthesis. The sequence is that of Cytochrome b (MT-CYB) from Brassica napus (Rape).